Here is a 212-residue protein sequence, read N- to C-terminus: MFEKYIMYLKNLIFFQFIVYFFFISLTILIIKNFQQEYSKSILDKQVAQENLTEEVLKLYSVINSKEEILESYKKYVALSVPKNSVSCLNYQELIPRIKSLGSKYNLVEPIDVSINSVFFKNNVQVIEGENESIHVNNYSINIKYACADFLTFLKIFSEIYSYMPPNTLISFVRVRNEEVLTPKNIYKLSVNHAPNLIYTKLILYIRELSSK.

Residues 11–31 (NLIFFQFIVYFFFISLTILII) form a helical membrane-spanning segment.

The protein resides in the membrane. This is an uncharacterized protein from Rickettsia prowazekii (strain Madrid E).